We begin with the raw amino-acid sequence, 878 residues long: uncharacterized protein (878 aa).

4 disordered regions span residues 58-223 (IGVD…RTKF), 306-494 (KGRL…TSSR), 585-652 (KLLE…SGKL), and 679-709 (PSSM…GGGG). Composition is skewed to low complexity over residues 64 to 213 (NGNS…SGTS), 314 to 325 (SNSSQSSDSDYS), and 335 to 355 (IPNS…PNSN). Over residues 362-372 (RNPNQLSSTNV) the composition is skewed to polar residues. A compositionally biased stretch (low complexity) spans 373–494 (NNNINNSGGS…TPTTPVTSSR (122 aa)). Positions 585 to 595 (KLLEQQKEQQQ) are enriched in basic and acidic residues. The segment covering 596 to 605 (KEQQQQQKQQ) has biased composition (low complexity). The segment covering 615–624 (TDDEDEDDDE) has biased composition (acidic residues). 2 stretches are compositionally biased toward low complexity: residues 639-652 (NLSN…SGKL) and 679-704 (PSSM…SSSS).

This is an uncharacterized protein from Dictyostelium discoideum (Social amoeba).